The primary structure comprises 328 residues: Carbonic anhydrase-related protein 10 (328 aa).

One can recognise an Alpha-carbonic anhydrase domain in the interval 31 to 301; sequence GWWAYKEVVQ…LNNRCIRTNI (271 aa).

The protein belongs to the alpha-carbonic anhydrase family.

Its function is as follows. Does not have a catalytic activity. This chain is Carbonic anhydrase-related protein 10 (CA10), found in Bos taurus (Bovine).